The chain runs to 212 residues: Uridine kinase (212 aa).

13 to 20 contacts ATP; that stretch reads GASASGKS.

The protein belongs to the uridine kinase family.

It localises to the cytoplasm. It catalyses the reaction uridine + ATP = UMP + ADP + H(+). It carries out the reaction cytidine + ATP = CMP + ADP + H(+). Its pathway is pyrimidine metabolism; CTP biosynthesis via salvage pathway; CTP from cytidine: step 1/3. It functions in the pathway pyrimidine metabolism; UMP biosynthesis via salvage pathway; UMP from uridine: step 1/1. This is Uridine kinase from Psychromonas ingrahamii (strain DSM 17664 / CCUG 51855 / 37).